Consider the following 313-residue polypeptide: MEIQFDEPKKSLRPKKVNKFKGRNKKSETRDKFVGVRQRPSGRYVAEIKDTTQNIRMWLGTFETAEEAARAYDEAATLLRGSKTRTNFVTHVSYDSPLASRIRHLLNNRKKGTKQQDMNGISSTTSHADTTNDTTSDGSTSSTTNCIGTASGAINSTSASGVTSTSTNISTSASGVASTSTDISTNSSNTNVNDKSESLLSSSTTMQKPNLFEDAYRPDMSNLTNEYESSSYKSNVSWDFGPIFDNFPFDQWLDMTNNDGLLCDMVDKGVSEFERMKVERQISASLYAINGVQEYMKNVQDCNEAQWNLSPLC.

Positions 1–10 (MEIQFDEPKK) are enriched in basic and acidic residues. Residues 1 to 29 (MEIQFDEPKKSLRPKKVNKFKGRNKKSET) form a disordered region. Basic residues predominate over residues 11–24 (SLRPKKVNKFKGRN). A DNA-binding region (AP2/ERF) is located at residues 32–89 (KFVGVRQRPSGRYVAEIKDTTQNIRMWLGTFETAEEAARAYDEAATLLRGSKTRTNFV). Disordered stretches follow at residues 108–143 (NRKKGTKQQDMNGISSTTSHADTTNDTTSDGSTSST) and 157–204 (TSAS…SSST). Low complexity-rich tracts occupy residues 122-143 (SSTTSHADTTNDTTSDGSTSST) and 157-193 (TSASGVTSTSTNISTSASGVASTSTDISTNSSNTNVN).

The protein belongs to the AP2/ERF transcription factor family. ERF subfamily. As to expression, expressed in roots, root hairs and leaves. Expressed in root epidermis and root hairs.

The protein localises to the nucleus. Functionally, transcription factor involved in symbiotic nodule signaling in response to rhizobial Nod factors (NFs). Binds to the GCC box (NF-responsive box) of ENOD11 promoter. Acts as a transcriptional activator of NF-responsive box-containing target gene promoters in root hairs. Involved in early stages of root nodule development. Functions redundantly with ERN1. Is essential with ERN1 for the initiation of root hair infection, and nodule organogenesis and development. Required for accurate expression of the NF signaling genes ENOD11 and ENOD12. In Medicago truncatula (Barrel medic), this protein is Ethylene-responsive transcription factor ERN2.